Consider the following 776-residue polypeptide: Ecdysone receptor (776 aa).

Positions 1–290 (MYRLNIVSTN…GPTPRQQEEL (290 aa)) are modulating. The disordered stretch occupies residues 199–283 (NEEWISSPSP…DAKKQKKGPT (85 aa)). A compositionally biased stretch (low complexity) spans 204-213 (SSPSPGSVPG). Polar residues-rich tracts occupy residues 227-245 (TTYTTTMSNGYSSPMSTGS) and 261-270 (SPSSSLNGYT). The nuclear receptor DNA-binding region spans 288 to 363 (EELCLVCGDR…VGMRPECVVP (76 aa)). 2 NR C4-type zinc fingers span residues 291 to 311 (CLVCGDRESGYHYNALTCEGC) and 327 to 346 (CKFGHACEMDMYMRRKCQEC). Residues 437–673 (NQMAVIYKLI…FLEEIWDVQD (237 aa)) enclose the NR LBD domain. Positions 679–688 (QAQMHSHGTQ) are enriched in polar residues. A disordered region spans residues 679–776 (QAQMHSHGTQ…VPGLGMLDQV (98 aa)). The span at 689-745 (SSSSSSSSSSSSSNGSSNGNSSSNSNSSQHGPHPHPHGQQLTPNQQQHQQQHSQLQQ) shows a compositional bias: low complexity.

The protein belongs to the nuclear hormone receptor family. NR1 subfamily. Heterodimer of USP and ECR. Only the heterodimer is capable of high-affinity binding to ecdysone. A peak level expression is seen in the fat body of previtellogenic female mosquitos at one and two days after eclosion, levels fall three-fold at three days posteclosion.

Its subcellular location is the nucleus. Its function is as follows. Receptor for ecdysone. Binds to ecdysone response elements (ECRES). This is Ecdysone receptor (EcR) from Aedes aegypti (Yellowfever mosquito).